We begin with the raw amino-acid sequence, 828 residues long: Toll-like receptor 4 (828 aa).

The signal sequence occupies residues 1–23 (MMSASRLAGTLIPAMAFLSCVRP). Over 24–629 (ESWEPCVVPN…SLNITCQMNK (606 aa)) the chain is Extracellular. A disulfide bridge connects residues cysteine 29 and cysteine 38. N-linked (GlcNAc...) asparagine glycosylation is present at asparagine 33. 5 LRR repeats span residues 53–74 (STKN…SFFS), 77–98 (ELQV…AYQS), 101–122 (HLST…AFSG), 125–146 (SLQK…PIGH), and 149–170 (TLKE…EYFS). N-linked (GlcNAc...) asparagine glycosylation is present at asparagine 171. LRR repeat units follow at residues 174–195 (NLEH…DLQV), 203–223 (NLSL…AFKE), and 225–245 (RLHK…KTCI). An N-linked (GlcNAc...) asparagine glycan is attached at asparagine 203. Cysteine 279 and cysteine 304 are disulfide-bonded. Residues asparagine 280 and asparagine 307 are each glycosylated (N-linked (GlcNAc...) asparagine). 8 LRR repeats span residues 372 to 392 (SLEF…CSQS), 398 to 420 (SLKY…LGLE), 421 to 442 (QLEH…SVFL), 446 to 454 (NLIYLDISH), 470 to 493 (SLKV…FTEL), 495 to 516 (NLTF…AFNS), 519 to 540 (SLQV…PYKC), and 543 to 563 (SLQV…QELQ). Cysteine 388 and cysteine 389 form a disulfide bridge. N-linked (GlcNAc...) asparagine glycosylation is found at asparagine 495 and asparagine 524. Asparagine 573 carries N-linked (GlcNAc...) asparagine glycosylation. In terms of domain architecture, LRRCT spans 577-627 (NDFACTCEHQSFLQWIKDQRQLLVEVERMECATPSDKQGMPVLSLNITCQM). 2 disulfide bridges follow: cysteine 581-cysteine 607 and cysteine 583-cysteine 625. Asparagine 622 and asparagine 628 each carry an N-linked (GlcNAc...) asparagine glycan. The helical transmembrane segment at 630–650 (TVIGVSVFSVLVVSVVAVLVY) threads the bilayer. Residues 651 to 828 (KFYFHLMLLA…WNPEGTVGTG (178 aa)) lie on the Cytoplasmic side of the membrane. Positions 670-813 (NTYDAFVIYS…IFWRRLRKAL (144 aa)) constitute a TIR domain.

This sequence belongs to the Toll-like receptor family. As to quaternary structure, belongs to the lipopolysaccharide (LPS) receptor, a multi-protein complex containing at least CD14, LY96 and TLR4. Binding to bacterial LPS leads to homodimerization. Interacts with LY96 via the extracellular domain. Interacts with MYD88 and TIRAP via their respective TIR domains. Interacts with TICAM2. Interacts with NOX4. Interacts with CNPY3 and HSP90B1; this interaction is required for proper folding in the endoplasmic reticulum. Interacts with MAP3K21; this interaction leads to negative regulation of TLR4 signaling. Interacts with CD36, following CD36 stimulation by oxLDL or amyloid-beta 42, and forms a heterodimer with TLR6. The trimeric complex is internalized and triggers inflammatory response. LYN kinase activity facilitates TLR4-TLR6 heterodimerization and signal initiation. Interacts with TICAM1 in response to LPS in a WDFY1-dependent manner. Interacts with WDFY1 in response to LPS. Interacts with SMPDL3B. Interacts with CEACAM1; upon lipopolysaccharide stimulation, forms a complex including TLR4 and the phosphorylated form of SYK and CEACAM1, which in turn, recruits PTPN6 that dephosphorylates SYK, reducing the production of reactive oxygen species (ROS) and lysosome disruption, which in turn, reduces the activity of the inflammasome. Interacts with RFTN1; the interaction occurs in response to lipopolysaccharide stimulation. Interacts with SCIMP; the interaction occurs in response to lipopolysaccharide stimulation and is enhanced by phosphorylation of SCIMP by LYN. This interaction facilitates the phosphorylation of TLR4 by LYN which elicits a selective cytokine response in macrophages. Interacts with TRAF3IP3. Interacts with TREM1; this interaction enhances TLR4-mediated inflammatory response. Interacts with ZG16B/PAUF. Interacts with CD82; this interaction inhibits TLR4-mediated signaling pathway. In terms of processing, phosphorylated on tyrosine residues by LYN after binding lipopolysaccharide. Ubiquitinated by RNF128 via 'Lys-28'-linked polyubiquitin chains, leading to proteasomal degradation.

It is found in the cell membrane. It localises to the early endosome. The protein resides in the cell projection. Its subcellular location is the ruffle. Transmembrane receptor that functions as a pattern recognition receptor recognizing pathogen- and damage-associated molecular patterns (PAMPs and DAMPs) to induce innate immune responses via downstream signaling pathways. At the plasma membrane, cooperates with LY96 to mediate the innate immune response to bacterial lipopolysaccharide (LPS). Also involved in LPS-independent inflammatory responses triggered by free fatty acids, such as palmitate, and Ni(2+). Mechanistically, acts via MYD88, TIRAP and TRAF6, leading to NF-kappa-B activation, cytokine secretion and the inflammatory response. Alternatively, CD14-mediated TLR4 internalization via endocytosis is associated with the initiation of a MYD88-independent signaling via the TICAM1-TBK1-IRF3 axis leading to type I interferon production. In addition to the secretion of proinflammatory cytokines, initiates the activation of NLRP3 inflammasome and formation of a positive feedback loop between autophagy and NF-kappa-B signaling cascade. In complex with TLR6, promotes inflammation in monocytes/macrophages by associating with TLR6 and the receptor CD86. Upon ligand binding, such as oxLDL or amyloid-beta 42, the TLR4:TLR6 complex is internalized and triggers inflammatory response, leading to NF-kappa-B-dependent production of CXCL1, CXCL2 and CCL9 cytokines, via MYD88 signaling pathway, and CCL5 cytokine, via TICAM1 signaling pathway. In myeloid dendritic cells, vesicular stomatitis virus glycoprotein G but not LPS promotes the activation of IRF7, leading to type I IFN production in a CD14-dependent manner. In Pongo pygmaeus (Bornean orangutan), this protein is Toll-like receptor 4 (TLR4).